A 154-amino-acid polypeptide reads, in one-letter code: Prefoldin subunit 2 (154 aa).

Disordered stretches follow at residues 1–20 (MADS…GKGA) and 126–154 (LMGE…VLVS). Residues 9-18 (GKSGGSGTGK) show a composition bias toward gly residues. Residues 126–139 (LMGEDEKPAAKENS) show a composition bias toward basic and acidic residues. Positions 141–154 (GAGAKSSSAGVLVS) are enriched in low complexity.

This sequence belongs to the prefoldin subunit beta family. In terms of assembly, heterohexamer of two PFD-alpha type and four PFD-beta type subunits. Component of the PAQosome complex which is responsible for the biogenesis of several protein complexes and which consists of R2TP complex members RUVBL1, RUVBL2, RPAP3 and PIH1D1, URI complex members PFDN2, PFDN6, PDRG1, UXT and URI1 as well as ASDURF, POLR2E and DNAAF10/WDR92. Interacts with URI1; the interaction is phosphorylation-dependent and occurs in a growth-dependent manner.

It is found in the nucleus. Its subcellular location is the cytoplasm. The protein resides in the mitochondrion. In terms of biological role, binds specifically to cytosolic chaperonin (c-CPN) and transfers target proteins to it. Binds to nascent polypeptide chain and promotes folding in an environment in which there are many competing pathways for nonnative proteins. The sequence is that of Prefoldin subunit 2 (Pfdn2) from Rattus norvegicus (Rat).